The primary structure comprises 166 residues: Cyanate hydratase (166 aa).

Catalysis depends on residues R92, E95, and S118.

Belongs to the cyanase family.

The catalysed reaction is cyanate + hydrogencarbonate + 3 H(+) = NH4(+) + 2 CO2. Catalyzes the reaction of cyanate with bicarbonate to produce ammonia and carbon dioxide. This is Cyanate hydratase from Zea mays (Maize).